We begin with the raw amino-acid sequence, 513 residues long: ATP synthase subunit alpha (513 aa).

169-176 (GDRQTGKS) serves as a coordination point for ATP.

This sequence belongs to the ATPase alpha/beta chains family. In terms of assembly, F-type ATPases have 2 components, CF(1) - the catalytic core - and CF(0) - the membrane proton channel. CF(1) has five subunits: alpha(3), beta(3), gamma(1), delta(1), epsilon(1). CF(0) has three main subunits: a(1), b(2) and c(9-12). The alpha and beta chains form an alternating ring which encloses part of the gamma chain. CF(1) is attached to CF(0) by a central stalk formed by the gamma and epsilon chains, while a peripheral stalk is formed by the delta and b chains.

It is found in the cell inner membrane. The enzyme catalyses ATP + H2O + 4 H(+)(in) = ADP + phosphate + 5 H(+)(out). Its function is as follows. Produces ATP from ADP in the presence of a proton gradient across the membrane. The alpha chain is a regulatory subunit. In Blochmanniella floridana, this protein is ATP synthase subunit alpha.